The following is a 231-amino-acid chain: 7-cyano-7-deazaguanine synthase (231 aa).

7-17 (LSSGLDSVAAL) is an ATP binding site. Positions 195, 203, 206, and 209 each coordinate Zn(2+).

This sequence belongs to the QueC family. The cofactor is Zn(2+).

It catalyses the reaction 7-carboxy-7-deazaguanine + NH4(+) + ATP = 7-cyano-7-deazaguanine + ADP + phosphate + H2O + H(+). The protein operates within purine metabolism; 7-cyano-7-deazaguanine biosynthesis. Its function is as follows. Catalyzes the ATP-dependent conversion of 7-carboxy-7-deazaguanine (CDG) to 7-cyano-7-deazaguanine (preQ(0)). The sequence is that of 7-cyano-7-deazaguanine synthase from Methanosarcina mazei (strain ATCC BAA-159 / DSM 3647 / Goe1 / Go1 / JCM 11833 / OCM 88) (Methanosarcina frisia).